The chain runs to 616 residues: Sodium- and chloride-dependent transporter XTRP3 (616 aa).

A compositionally biased stretch (basic residues) spans 1-11; sequence MRLAIKRRASR. Residues 1–26 form a disordered region; it reads MRLAIKRRASRGQRPGPDEKRARDME. Residues 1–37 lie on the Cytoplasmic side of the membrane; the sequence is MRLAIKRRASRGQRPGPDEKRARDMEKARPQWGNPLQ. Residues 16 to 26 show a composition bias toward basic and acidic residues; it reads GPDEKRARDME. Residues 38 to 58 form a helical membrane-spanning segment; sequence FVFACISYAVGLGNVWRFPYL. Residues 59-66 lie on the Extracellular side of the membrane; that stretch reads CQMYGGGS. Residues 67–87 form a helical membrane-spanning segment; that stretch reads FLVPYLIMLIVEGMPLLYLEL. The Cytoplasmic segment spans residues 88–103; the sequence is AVGQRMRQGSIGAWRT. A helical transmembrane segment spans residues 104–124; sequence ISPYLSGVGVASVVVSFFLSM. Over 125–189 the chain is Extracellular; it reads YYNVINAWGF…ISPSIQENGG (65 aa). N155 is a glycosylation site (N-linked (GlcNAc...) asparagine). A helical membrane pass occupies residues 190–210; sequence VQWEPALCLTLAWLMVYLCIL. Over 211-218 the chain is Cytoplasmic; that stretch reads RGTESTGK. The chain crosses the membrane as a helical span at residues 219–239; it reads VVYFTALMPYCVLIIYLVRGL. Over 240–265 the chain is Extracellular; sequence TLHGATNGLMYMFTPKIEQLANPKAW. The chain crosses the membrane as a helical span at residues 266–286; the sequence is INAATQIFFSLGLGFGSLIAF. At 287-300 the chain is on the cytoplasmic side; sequence ASYNEPSNDCQKHA. A helical transmembrane segment spans residues 301–321; the sequence is VIVSVINSSTSIFASIVTFSI. At 322 to 413 the chain is on the extracellular side; sequence YGFKATFNYE…EAIKNMEVSQ (92 aa). N-linked (GlcNAc...) asparagine glycosylation is present at N381. A helical transmembrane segment spans residues 414-434; that stretch reads LWSVLYFFMLLMLGMGSMLGN. Residues 435–455 are Cytoplasmic-facing; it reads TAAILTPLTDSKVISSYLPKE. Residues 456 to 476 form a helical membrane-spanning segment; sequence AISGLVCLINCAVGMVFTMEA. Residues 477 to 489 are Extracellular-facing; the sequence is GNYWFDIFNDYAA. The helical transmembrane segment at 490 to 510 threads the bilayer; sequence TLSLLLIVLVETIAVCYVYGL. The Cytoplasmic segment spans residues 511–533; it reads RRFESDLRAMTGRPLNWYWKAMW. Residues 534-554 traverse the membrane as a helical segment; that stretch reads AFVSPLLIIGLFIFYLSDYIL. Residues 555 to 578 lie on the Extracellular side of the membrane; that stretch reads TGTLQYQAWDATQGQLVTKDYPPH. A helical transmembrane segment spans residues 579 to 599; it reads ALAVIGLLVASSTMCIPLVAL. At 600–616 the chain is on the cytoplasmic side; it reads GTFIRNRLKRGGSSPVA.

The protein belongs to the sodium:neurotransmitter symporter (SNF) (TC 2.A.22) family. SLC6A20 subfamily. Highly expressed in epithelial cells of duodenum, jejunum, ileum, stomach, cecum, colon and kidney proximal tubule. Also expressed in the choroid plexus, microglia and meniges of the brain and in the ovary.

It localises to the apical cell membrane. It carries out the reaction L-proline(out) + chloride(out) + 2 Na(+)(out) = L-proline(in) + chloride(in) + 2 Na(+)(in). It catalyses the reaction 4-hydroxy-L-proline(out) + chloride(out) + 2 Na(+)(out) = 4-hydroxy-L-proline(in) + chloride(in) + 2 Na(+)(in). The enzyme catalyses 2-methyl-2-(methylamino)propanoate(out) + chloride(out) + 2 Na(+)(out) = 2-methyl-2-(methylamino)propanoate(in) + chloride(in) + 2 Na(+)(in). The catalysed reaction is L-pipecolate(out) + chloride(out) + 2 Na(+)(out) = L-pipecolate(in) + chloride(in) + 2 Na(+)(in). It carries out the reaction glycine betaine(out) + chloride(out) + 2 Na(+)(out) = glycine betaine(in) + chloride(in) + 2 Na(+)(in). It catalyses the reaction glycine(out) + chloride(out) + 2 Na(+)(out) = glycine(in) + chloride(in) + 2 Na(+)(in). Functionally, mediates the Na(+)- and Cl(-)-dependent uptake of imino acids such as L-proline, N-methyl-L-proline and pipecolate as well as N-methylated amino acids. Also transports glycine, regulates proline and glycine homeostasis in the brain playing a role in the modulation of NMDAR currents. The protein is Sodium- and chloride-dependent transporter XTRP3 of Rattus norvegicus (Rat).